We begin with the raw amino-acid sequence, 153 residues long: 3-hydroxyacyl-[acyl-carrier-protein] dehydratase FabZ (153 aa).

His47 is an active-site residue.

Belongs to the thioester dehydratase family. FabZ subfamily.

The protein resides in the cytoplasm. It catalyses the reaction a (3R)-hydroxyacyl-[ACP] = a (2E)-enoyl-[ACP] + H2O. Involved in unsaturated fatty acids biosynthesis. Catalyzes the dehydration of short chain beta-hydroxyacyl-ACPs and long chain saturated and unsaturated beta-hydroxyacyl-ACPs. In Dichelobacter nodosus (strain VCS1703A), this protein is 3-hydroxyacyl-[acyl-carrier-protein] dehydratase FabZ.